The following is a 380-amino-acid chain: Set1 complex component swd3 (380 aa).

WD repeat units lie at residues 52–91, 94–133, 136–177, 179–219, 221–262, 291–330, and 335–374; these read GHEKSVTCVSVSPNKRWIATSSSDGTIKIWSALTFRLECT, GHYRGISQVKWATGSKYLASASDDKTIRIWDFEKRCSVRC, GHTN…RMLP, HSEP…KTLV, PINV…RIFD, NDSSYPDDAESFMHDAYLLIPSEDGTIQITDPSTKIIIDD, and SDDPETSLLNVTSLGPFIITSGTDPYVRVWAPSLLLSKHE. S379 carries the phosphoserine modification.

Component of the Set1 complex composed of ash2, sdc1, set1, shg1, spp1, swd1, swd2 and swd3.

The protein localises to the nucleus. Functionally, the Set1 complex specifically methylates 'Lys-4' of histone H3. This Schizosaccharomyces pombe (strain 972 / ATCC 24843) (Fission yeast) protein is Set1 complex component swd3.